The sequence spans 623 residues: Quinoprotein ethanol dehydrogenase (623 aa).

Residues 1–34 (MTIRSLPAALSPLSMAVQAVLLVSSLALAPAANA) form the signal peptide. The Ca(2+) site is built by D45 and N51. E95 contributes to the pyrroloquinoline quinone binding site. A disulfide bridge connects residues C139 and C140. Residues R145, T189, and 207–209 (HGS) contribute to the pyrroloquinoline quinone site. Position 213 (E213) interacts with Ca(2+). The tract at residues 242–279 (GRLNGKDSTPTGDVKAPSWPDDPTTETGKVESWSHGGG) is disordered. The Ca(2+) site is built by N300 and D350. The active-site Proton acceptor is the D350. R378 contributes to the pyrroloquinoline quinone binding site. Residues 414–436 (RPVENEGQRPAKPLPGETKGKPV) are disordered. WD repeat units lie at residues 515–556 (EHNE…ELWK) and 559–601 (TGSG…LTKP). Residues W523 and A587 each coordinate pyrroloquinoline quinone.

This sequence belongs to the bacterial PQQ dehydrogenase family. In terms of assembly, homodimer. Pyrroloquinoline quinone serves as cofactor. Ca(2+) is required as a cofactor.

Its subcellular location is the periplasm. The enzyme catalyses a primary alcohol + 2 Fe(III)-[cytochrome c] = an aldehyde + 2 Fe(II)-[cytochrome c] + 2 H(+). The catalysed reaction is ethanol + 2 Fe(III)-[cytochrome c] = acetaldehyde + 2 Fe(II)-[cytochrome c] + 2 H(+). It carries out the reaction ethanol + A = acetaldehyde + AH2. It catalyses the reaction 1-propanol + 2 Fe(III)-[cytochrome c] = propanal + 2 Fe(II)-[cytochrome c] + 2 H(+). It functions in the pathway alcohol metabolism; ethanol degradation; acetate from ethanol: step 1/2. With respect to regulation, enhanced by the presence of ethylamine or NH4(+) ions. Catalyzes the oxidation of ethanol and other primary alcohols to the corresponding aldehydes, except methanol, which is not a substrate. Uses a specific inducible cytochrome c550, encoded by the adjacent gene in the locus, as electron acceptor. Is a key enzyme of the carbon and energy metabolism during growth of P.putida on ethanol as the sole carbon and energy source. Displays lower activity on secondary alcohols, aldehydes and diols. Is not active with sugar alcohols such as glycerol and D-sorbitol. In vitro, reacts well with phenazine methosulfate (PMS) as an electron acceptor but not with NAD(P), potassium ferricyanide, or molecular oxygen. In Pseudomonas putida (Arthrobacter siderocapsulatus), this protein is Quinoprotein ethanol dehydrogenase.